An 89-amino-acid chain; its full sequence is Helix-loop-helix protein 15 (89 aa).

The disordered stretch occupies residues Met-1–Lys-32. The segment covering Glu-22–Lys-32 has biased composition (basic residues). Positions Lys-32–Val-45 are basic motif. One can recognise a bHLH domain in the interval Lys-32–Leu-84. The interval Glu-46–Leu-84 is helix-loop-helix motif.

Expressed in sensory head neurons of the lateral ganglion.

The protein resides in the nucleus. Its function is as follows. Transcription factor which binds the E box motif 5'-CA[TC][AG]TG-3'. Involved in modulating physiological aging, probably by regulating expression of branched-chain amino acid transferase-1, bcat-1. The polypeptide is Helix-loop-helix protein 15 (Caenorhabditis elegans).